The following is a 120-amino-acid chain: Chaperonin GroEL (120 aa).

23 to 27 (DGTTT) lines the ATP pocket.

It belongs to the chaperonin (HSP60) family. As to quaternary structure, forms a cylinder of 14 subunits composed of two heptameric rings stacked back-to-back. Interacts with the co-chaperonin GroES.

It localises to the cytoplasm. It carries out the reaction ATP + H2O + a folded polypeptide = ADP + phosphate + an unfolded polypeptide.. Together with its co-chaperonin GroES, plays an essential role in assisting protein folding. The GroEL-GroES system forms a nano-cage that allows encapsulation of the non-native substrate proteins and provides a physical environment optimized to promote and accelerate protein folding. This Mycobacterium intracellulare protein is Chaperonin GroEL.